A 941-amino-acid chain; its full sequence is ATP-dependent 6-phosphofructokinase subunit beta (941 aa).

Positions 2–558 (PDASLFNGTS…HMKNFISTNS (557 aa)) are N-terminal catalytic PFK domain 1. ATP is bound by residues Gly-191, 255–256 (RC), and 285–288 (GDGS). Asp-286 serves as a coordination point for Mg(2+). Beta-D-fructose 6-phosphate-binding positions include 331–333 (SID), Arg-368, 375–377 (MGR), Glu-432, Arg-460, and 466–469 (HVQR). Asp-333 (proton acceptor) is an active-site residue. The segment at 559 to 572 (ADHVPPSLPLEKRK) is interdomain linker. The tract at residues 573–941 (KVAIINVGAP…SDMLSGRTSL (369 aa)) is C-terminal regulatory PFK domain 2. Residues Arg-643, 701–705 (TISNN), Arg-739, 746–748 (QGG), Glu-806, Lys-832, 838–841 (HVQQ), and Arg-918 each bind beta-D-fructose 2,6-bisphosphate.

The protein belongs to the phosphofructokinase type A (PFKA) family. ATP-dependent PFK group I subfamily. Eukaryotic two domain clade 'E' sub-subfamily. In terms of assembly, heterododecamer of 4 alpha, 4 beta and 4 gamma chains. The gamma chain bridges the N-terminal halves of the alpha and beta subunits. Mg(2+) is required as a cofactor.

It localises to the cytoplasm. It carries out the reaction beta-D-fructose 6-phosphate + ATP = beta-D-fructose 1,6-bisphosphate + ADP + H(+). It participates in carbohydrate degradation; glycolysis; D-glyceraldehyde 3-phosphate and glycerone phosphate from D-glucose: step 3/4. Its activity is regulated as follows. Allosterically activated by ADP, AMP, or fructose 2,6-bisphosphate, and allosterically inhibited by ATP or citrate. Its function is as follows. Catalyzes the phosphorylation of D-fructose 6-phosphate to fructose 1,6-bisphosphate by ATP, the first committing step of glycolysis. The protein is ATP-dependent 6-phosphofructokinase subunit beta (PFK2) of Komagataella phaffii (strain GS115 / ATCC 20864) (Yeast).